The primary structure comprises 1089 residues: Probable transport protein MmpL8 (1089 aa).

The disordered stretch occupies residues 1–26; that stretch reads MCDVLMQPVRTPRPSTNLRSKPLRPT. Helical transmembrane passes span 44-64, 222-242, 257-277, 316-336, 349-369, 400-420, 555-575, 874-894, 898-918, 930-950, 973-993, and 996-1016; these read WVVI…VPSL, ITIL…TMVL, LVAI…IFMS, IGKV…GMVF, LGIS…ALMV, KTHL…AGLA, AIST…LLGG, IIAM…RAIV, YLIG…VIVF, IPGL…MLLI, GGVI…LVFA, and GSVV…TFLV. The interval 1056 to 1078 is disordered; that stretch reads RTKRKPLLPKEEEEQSPPDDDDL. Acidic residues predominate over residues 1066–1078; that stretch reads EEEEQSPPDDDDL.

This sequence belongs to the resistance-nodulation-cell division (RND) (TC 2.A.6) family. MmpL subfamily.

The protein resides in the cell membrane. This chain is Probable transport protein MmpL8 (mmpL8), found in Mycobacterium bovis (strain ATCC BAA-935 / AF2122/97).